Here is a 1207-residue protein sequence, read N- to C-terminus: Systemin receptor SR160 (1207 aa).

Positions 1-34 (MKAHKTVFNQHPLSLNKLFFVLLLIFFLPPASPA) are cleaved as a signal peptide. The short motif at 71 to 78 (CSFTGVSC) is the Cys pair 1 element. 20 LRR repeats span residues 109 to 131 (NLES…AKSQ), 135 to 157 (TLDS…SSFG), 161 to 181 (NLKS…EMLK), 186 to 207 (SLQV…PWVS), 213 to 234 (ELEF…LDFK), 235 to 257 (NLSY…KDCS), 258 to 280 (NLQH…LSSC), 282 to 304 (KLSF…PSES), 305 to 325 (LQYL…QLAD), 329 to 350 (TVVE…SLGE), 353 to 375 (SLEL…TLLK), 378 to 401 (NIKT…SNLP), 402 to 423 (KLET…GICK), 428 to 450 (NLKV…LSNC), 452 to 474 (QLVS…LGSL), 476 to 499 (KLKD…MYLQ), 500 to 523 (ALEN…SNCT), 524 to 547 (KLNW…GRLS), 548 to 570 (NLAI…LGNC), and 572 to 594 (SLIW…LFKQ). N-linked (GlcNAc...) asparagine glycosylation is present at Asn-119. Residues Asn-166 and Asn-196 are each glycosylated (N-linked (GlcNAc...) asparagine). N-linked (GlcNAc...) asparagine glycans are attached at residues Asn-235 and Asn-245. N-linked (GlcNAc...) asparagine glycosylation is present at Asn-287. Residues Asn-339 and Asn-363 are each glycosylated (N-linked (GlcNAc...) asparagine). 2 N-linked (GlcNAc...) asparagine glycosylation sites follow: Asn-412 and Asn-449. N-linked (GlcNAc...) asparagine glycosylation is present at Asn-521. 4 N-linked (GlcNAc...) asparagine glycosylation sites follow: Asn-556, Asn-584, Asn-646, and Asn-662. LRR repeat units follow at residues 664–686 (SMIF…LGAM), 688–711 (YLSI…GGLK), 712–735 (NVAI…TSLT), and 736–758 (LLGE…APFD). 3 N-linked (GlcNAc...) asparagine glycosylation sites follow: Asn-724, Asn-746, and Asn-767. Positions 771-779 (CGYPLPLPC) match the Cys pair 2 motif. Residues 803 to 823 (SVAMGLLFSLFCIFGLIIVAI) traverse the membrane as a helical segment. Residues 888 to 1163 (FHNDSLVGSG…IQVMAMFKEI (276 aa)) form the Protein kinase domain. ATP-binding positions include 894–902 (VGSGGFGDV) and Lys-916. Catalysis depends on Asp-1014, which acts as the Proton acceptor.

This sequence belongs to the protein kinase superfamily. Ser/Thr protein kinase family. In terms of processing, glycosylated.

It localises to the cell membrane. The enzyme catalyses L-seryl-[protein] + ATP = O-phospho-L-seryl-[protein] + ADP + H(+). It carries out the reaction L-threonyl-[protein] + ATP = O-phospho-L-threonyl-[protein] + ADP + H(+). Its function is as follows. Receptor with a serine/threonine-protein kinase activity. Involved in the perception of systemin, a peptide hormone responsible for the systemic activation of defense genes in leaves of wounded plants. May also regulate, in response to brassinosteroid binding, a signaling cascade involved in plant development. The chain is Systemin receptor SR160 from Solanum peruvianum (Peruvian tomato).